A 328-amino-acid polypeptide reads, in one-letter code: Malate dehydrogenase (328 aa).

16–22 is a binding site for NAD(+); it reads GAAGQIS. Substrate contacts are provided by Arg97 and Arg103. NAD(+) is bound by residues Asn110, Gln117, and 134–136; that span reads VGN. Asn136 and Arg167 together coordinate substrate. Residue His192 is the Proton acceptor of the active site.

Belongs to the LDH/MDH superfamily. MDH type 2 family.

It catalyses the reaction (S)-malate + NAD(+) = oxaloacetate + NADH + H(+). In terms of biological role, catalyzes the reversible oxidation of malate to oxaloacetate. This is Malate dehydrogenase from Corynebacterium glutamicum (strain R).